The following is a 783-amino-acid chain: Polyadenylate-binding protein, cytoplasmic and nuclear (783 aa).

The disordered stretch occupies residues 16–65 (DLGNTSLGGGDNRAAPAINTNVAPGEYQTADPDTAGPTPSSAAPHPQSSA). Residues 54-65 (PSSAAPHPQSSA) are compositionally biased toward low complexity. RRM domains lie at 65-143 (ASLY…WSQR), 153-230 (GNVF…YHIP), 246-323 (TNIY…RAQK), and 349-471 (VNLY…LAQR). 3 disordered regions span residues 381–428 (MRDA…KGDR), 596–671 (AAAL…AAGG), and 752–783 (VKSQ…EEKA). The segment covering 396–406 (GKDKENKKEGE) has biased composition (basic and acidic residues). Residues 407 to 416 (QAAEAEGEAE) show a composition bias toward acidic residues. Basic and acidic residues predominate over residues 417–428 (GAEKKTEKKGDR). A compositionally biased stretch (gly residues) spans 601 to 614 (NGRGGPGGPGGRGM). Positions 630–641 (AGFPPNGRPQNG) are enriched in low complexity. Gly residues predominate over residues 642 to 655 (NMGGRGGPGRGGNF). The segment covering 656-671 (AAGRGAPPAGPLAAGG) has biased composition (low complexity). The PABC domain occupies 676–753 (SSLLQSQLTA…AMAVYDEYVK (78 aa)). Residues 770 to 783 (EAEKPKEEKAEEKA) show a composition bias toward basic and acidic residues.

The protein belongs to the polyadenylate-binding protein type-1 family.

The protein localises to the cytoplasm. It is found in the nucleus. Its function is as follows. Binds the poly(A) tail of mRNA. Appears to be an important mediator of the multiple roles of the poly(A) tail in mRNA biogenesis, stability and translation. In the nucleus, involved in both mRNA cleavage and polyadenylation. Is also required for efficient mRNA export to the cytoplasm. Acts in concert with a poly(A)-specific nuclease (PAN) to affect poly(A) tail shortening, which may occur concomitantly with either nucleocytoplasmic mRNA transport or translational initiation. In the cytoplasm, stimulates translation initiation and regulates mRNA decay through translation termination-coupled poly(A) shortening, probably mediated by PAN. The polypeptide is Polyadenylate-binding protein, cytoplasmic and nuclear (PAB1) (Chaetomium globosum (strain ATCC 6205 / CBS 148.51 / DSM 1962 / NBRC 6347 / NRRL 1970) (Soil fungus)).